An 881-amino-acid chain; its full sequence is DNA mismatch repair protein MutS (881 aa).

612 to 619 (GPNMAGKS) lines the ATP pocket.

This sequence belongs to the DNA mismatch repair MutS family.

Functionally, this protein is involved in the repair of mismatches in DNA. It is possible that it carries out the mismatch recognition step. This protein has a weak ATPase activity. This is DNA mismatch repair protein MutS from Clostridium tetani (strain Massachusetts / E88).